A 576-amino-acid polypeptide reads, in one-letter code: MDEQITGGYSEPCGQCAAVDWGVSDEGQFFCKSCHNVIEKIREVEDVTSLHHKHGRISIVRKPKKKKHDSEREWLVCEGFQFILKHQAKALVSLGVCMKFETEVLWNFWKRYLQNTRQAFTENPVSTARFEVFMKSQSGSESDTQSHQSCYSEASSDTEMSVSGISVDGRSAVSSESLHSIPQKGRRGRVSNLMSMPRTLAMCYLALLWVREAITLTDLLRMVAEGHIPYLHLHETFPAEMRMFGKDVQIFRVLFFPSYAFIKKEALVLAKIMKLPSFPTISQDCLFHPVPLTVRYLLEANLPDALHVWVQKVITGAGMDSDSFLTFDPTDKKPHLLSYDVQAVAVIIVAMKLLFKLDDHVEWKLSHDAAKKKNNKVFSLERWFNIVQPVLEQARLKEEQEEARRQWNFANPFITNLKRKSLVLKKRRVTDHLQQRFQKFADPAPEQSTSTTNSHTSFRFSWGEEEGSDGPSMFNQNLDCTVKAKAVNGLANQRYWHPELRICPENKCVSHFSKFEPSLPRMFVWVLDLFSFILGVLQSDVYEEVLNVERRFLKKNYRLDSRLTSSHLKKKKGPIL.

An RRN7-type zinc finger spans residues 6–39; the sequence is TGGYSEPCGQCAAVDWGVSDEGQFFCKSCHNVIE. 4 residues coordinate Zn(2+): Cys13, Cys16, Cys31, and Cys34. Residues 40–70 are B-reader; the sequence is KIREVEDVTSLHHKHGRISIVRKPKKKKHDS. The interval 71–73 is B-linker; it reads ERE. Residues 74-246 are N-terminal cyclin fold; the sequence is WLVCEGFQFI…FPAEMRMFGK (173 aa). The interval 137 to 157 is disordered; the sequence is QSGSESDTQSHQSCYSEASSD. Positions 247–357 are C-terminal cyclin fold; that stretch reads DVQIFRVLFF…IVAMKLLFKL (111 aa).

This sequence belongs to the RRN7/TAF1B family.

It localises to the nucleus. Its subcellular location is the nucleolus. Functionally, component of RNA polymerase I core factor complex that acts as a GTF2B/TFIIB-like factor and plays a key role in multiple steps during transcription initiation such as pre-initiation complex (PIC) assembly and postpolymerase recruitment events in polymerase I (Pol I) transcription. Binds rDNA promoters and plays a role in Pol I recruitment. The polypeptide is TATA box-binding protein-associated factor RNA polymerase I subunit B (taf1b) (Danio rerio (Zebrafish)).